A 344-amino-acid polypeptide reads, in one-letter code: Heat-inducible transcription repressor HrcA (344 aa).

Belongs to the HrcA family.

In terms of biological role, negative regulator of class I heat shock genes (grpE-dnaK-dnaJ and groELS operons). Prevents heat-shock induction of these operons. This Streptococcus mutans serotype c (strain ATCC 700610 / UA159) protein is Heat-inducible transcription repressor HrcA.